A 490-amino-acid polypeptide reads, in one-letter code: Ent-kaurenoic acid oxidase 1 (490 aa).

A helical membrane pass occupies residues 6 to 26; that stretch reads SWIPVWFPLMVLGCFGLNWLV. C439 serves as a coordination point for heme.

It belongs to the cytochrome P450 family. Heme serves as cofactor. As to expression, widely expressed. Highly expressed in influorescence stem, influorescence, and silique tissue. Weakly expressed in cauline and rosette leaves. Expressed at a higher level in stem and influorescence than AtKAO2/CYP88A4.

Its subcellular location is the endoplasmic reticulum membrane. It catalyses the reaction ent-kaur-16-en-19-oate + 3 reduced [NADPH--hemoprotein reductase] + 3 O2 = gibberellin A12 + 3 oxidized [NADPH--hemoprotein reductase] + 4 H2O + 4 H(+). It carries out the reaction ent-kaur-16-en-19-oate + reduced [NADPH--hemoprotein reductase] + O2 = ent-7alpha-hydroxykaur-16-en-19-oate + oxidized [NADPH--hemoprotein reductase] + H2O + H(+). The catalysed reaction is ent-7alpha-hydroxykaur-16-en-19-oate + reduced [NADPH--hemoprotein reductase] + O2 = gibberellin A12 aldehyde + oxidized [NADPH--hemoprotein reductase] + 2 H2O + H(+). The enzyme catalyses gibberellin A12 aldehyde + reduced [NADPH--hemoprotein reductase] + O2 = gibberellin A12 + oxidized [NADPH--hemoprotein reductase] + H2O + 2 H(+). Its pathway is plant hormone biosynthesis; gibberellin biosynthesis. In terms of biological role, catalyzes three successive oxidations of ent-kaurenoic acid giving gibberellin 12 (GA12), a key step in gibberellins (GAs) biosynthesis. GAs, which are involved many processes, including stem elongation, play a central role in plant development. The sequence is that of Ent-kaurenoic acid oxidase 1 from Arabidopsis thaliana (Mouse-ear cress).